The following is a 369-amino-acid chain: Ribonuclease D (369 aa).

A 3'-5' exonuclease domain is found at 1-166 (MITTNDALAA…PIAHKLMEQV (166 aa)). The 80-residue stretch at 206–285 (RPRQLACLKL…AQAQALLEDA (80 aa)) folds into the HRDC domain.

This sequence belongs to the RNase D family. A divalent metal cation is required as a cofactor.

It localises to the cytoplasm. It carries out the reaction Exonucleolytic cleavage that removes extra residues from the 3'-terminus of tRNA to produce 5'-mononucleotides.. In terms of biological role, exonuclease involved in the 3' processing of various precursor tRNAs. Initiates hydrolysis at the 3'-terminus of an RNA molecule and releases 5'-mononucleotides. The chain is Ribonuclease D from Cronobacter turicensis (strain DSM 18703 / CCUG 55852 / LMG 23827 / z3032).